Here is a 196-residue protein sequence, read N- to C-terminus: Putative lipopolysaccharide biosynthesis O-acetyl transferase WbbJ (196 aa).

The protein belongs to the transferase hexapeptide repeat family.

It functions in the pathway bacterial outer membrane biogenesis; lipopolysaccharide biosynthesis. Its function is as follows. Putative O-acetyltransferase that transfers an O-acetyl group to the O antigen. In Escherichia coli (strain K12), this protein is Putative lipopolysaccharide biosynthesis O-acetyl transferase WbbJ (wbbJ).